Here is a 280-residue protein sequence, read N- to C-terminus: Type II restriction enzyme MboI (280 aa).

This sequence belongs to the DpnII type II restriction endonuclease family.

The enzyme catalyses Endonucleolytic cleavage of DNA to give specific double-stranded fragments with terminal 5'-phosphates.. Its function is as follows. A P subtype restriction enzyme that recognizes the double-stranded unmethylated sequence 5'-GATC-3' and cleaves before G-1. This chain is Type II restriction enzyme MboI (mboIR), found in Moraxella bovis.